Here is a 53-residue protein sequence, read N- to C-terminus: UPF0391 membrane protein ETA_06630 (53 aa).

The next 2 membrane-spanning stretches (helical) occupy residues 4 to 24 (WGIIFLVIALIAAALGFGGLA) and 27 to 47 (AAWAAKVVFVVGIVIFLISLF).

This sequence belongs to the UPF0391 family.

The protein resides in the cell membrane. In Erwinia tasmaniensis (strain DSM 17950 / CFBP 7177 / CIP 109463 / NCPPB 4357 / Et1/99), this protein is UPF0391 membrane protein ETA_06630.